The chain runs to 504 residues: Glucose-6-phosphate isomerase (504 aa).

Glu-333 functions as the Proton donor in the catalytic mechanism. Active-site residues include His-364 and Lys-473.

It belongs to the GPI family.

Its subcellular location is the cytoplasm. It carries out the reaction alpha-D-glucose 6-phosphate = beta-D-fructose 6-phosphate. It participates in carbohydrate biosynthesis; gluconeogenesis. The protein operates within carbohydrate degradation; glycolysis; D-glyceraldehyde 3-phosphate and glycerone phosphate from D-glucose: step 2/4. Catalyzes the reversible isomerization of glucose-6-phosphate to fructose-6-phosphate. In Xanthomonas oryzae pv. oryzae (strain KACC10331 / KXO85), this protein is Glucose-6-phosphate isomerase.